Consider the following 282-residue polypeptide: 4-hydroxy-3-methylbut-2-enyl diphosphate reductase (282 aa).

[4Fe-4S] cluster is bound at residue cysteine 12. (2E)-4-hydroxy-3-methylbut-2-enyl diphosphate-binding residues include histidine 40 and histidine 72. Dimethylallyl diphosphate contacts are provided by histidine 40 and histidine 72. Isopentenyl diphosphate is bound by residues histidine 40 and histidine 72. Cysteine 94 provides a ligand contact to [4Fe-4S] cluster. Histidine 122 provides a ligand contact to (2E)-4-hydroxy-3-methylbut-2-enyl diphosphate. Histidine 122 lines the dimethylallyl diphosphate pocket. Histidine 122 is a binding site for isopentenyl diphosphate. Glutamate 124 functions as the Proton donor in the catalytic mechanism. A (2E)-4-hydroxy-3-methylbut-2-enyl diphosphate-binding site is contributed by threonine 160. Cysteine 188 provides a ligand contact to [4Fe-4S] cluster. Residues serine 216, asparagine 218, and serine 260 each coordinate (2E)-4-hydroxy-3-methylbut-2-enyl diphosphate. Residues serine 216, asparagine 218, and serine 260 each contribute to the dimethylallyl diphosphate site. Residues serine 216, asparagine 218, and serine 260 each contribute to the isopentenyl diphosphate site.

Belongs to the IspH family. [4Fe-4S] cluster is required as a cofactor.

The catalysed reaction is isopentenyl diphosphate + 2 oxidized [2Fe-2S]-[ferredoxin] + H2O = (2E)-4-hydroxy-3-methylbut-2-enyl diphosphate + 2 reduced [2Fe-2S]-[ferredoxin] + 2 H(+). It catalyses the reaction dimethylallyl diphosphate + 2 oxidized [2Fe-2S]-[ferredoxin] + H2O = (2E)-4-hydroxy-3-methylbut-2-enyl diphosphate + 2 reduced [2Fe-2S]-[ferredoxin] + 2 H(+). It participates in isoprenoid biosynthesis; dimethylallyl diphosphate biosynthesis; dimethylallyl diphosphate from (2E)-4-hydroxy-3-methylbutenyl diphosphate: step 1/1. The protein operates within isoprenoid biosynthesis; isopentenyl diphosphate biosynthesis via DXP pathway; isopentenyl diphosphate from 1-deoxy-D-xylulose 5-phosphate: step 6/6. Catalyzes the conversion of 1-hydroxy-2-methyl-2-(E)-butenyl 4-diphosphate (HMBPP) into a mixture of isopentenyl diphosphate (IPP) and dimethylallyl diphosphate (DMAPP). Acts in the terminal step of the DOXP/MEP pathway for isoprenoid precursor biosynthesis. The sequence is that of 4-hydroxy-3-methylbut-2-enyl diphosphate reductase from Geotalea uraniireducens (strain Rf4) (Geobacter uraniireducens).